Reading from the N-terminus, the 86-residue chain is Signal recognition particle 9 kDa protein (86 aa).

This sequence belongs to the SRP9 family. Heterodimer with SRP14; binds RNA as heterodimer. Component of a signal recognition particle complex that consists of a 7SL RNA molecule of 300 nucleotides and six protein subunits: SRP72, SRP68, SRP54, SRP19, SRP14 and SRP9.

The protein resides in the cytoplasm. Component of the signal recognition particle (SRP) complex, a ribonucleoprotein complex that mediates the cotranslational targeting of secretory and membrane proteins to the endoplasmic reticulum (ER). SRP9 together with SRP14 and the Alu portion of the SRP RNA, constitutes the elongation arrest domain of SRP. The complex of SRP9 and SRP14 is required for SRP RNA binding. In Mus musculus (Mouse), this protein is Signal recognition particle 9 kDa protein (Srp9).